The chain runs to 209 residues: Ribosomal RNA large subunit methyltransferase E (209 aa).

5 residues coordinate S-adenosyl-L-methionine: Gly-63, Trp-65, Asp-83, Asp-99, and Asp-124. The active-site Proton acceptor is the Lys-164.

The protein belongs to the class I-like SAM-binding methyltransferase superfamily. RNA methyltransferase RlmE family.

It is found in the cytoplasm. The enzyme catalyses uridine(2552) in 23S rRNA + S-adenosyl-L-methionine = 2'-O-methyluridine(2552) in 23S rRNA + S-adenosyl-L-homocysteine + H(+). Its function is as follows. Specifically methylates the uridine in position 2552 of 23S rRNA at the 2'-O position of the ribose in the fully assembled 50S ribosomal subunit. The polypeptide is Ribosomal RNA large subunit methyltransferase E (Sodalis glossinidius (strain morsitans)).